Here is a 172-residue protein sequence, read N- to C-terminus: Protein-export protein SecB (172 aa).

It belongs to the SecB family. As to quaternary structure, homotetramer, a dimer of dimers. One homotetramer interacts with 1 SecA dimer.

The protein localises to the cytoplasm. Its function is as follows. One of the proteins required for the normal export of preproteins out of the cell cytoplasm. It is a molecular chaperone that binds to a subset of precursor proteins, maintaining them in a translocation-competent state. It also specifically binds to its receptor SecA. The chain is Protein-export protein SecB from Bordetella avium (strain 197N).